Here is a 424-residue protein sequence, read N- to C-terminus: Phosphoprotein associated with glycosphingolipid-enriched microdomains 1 (424 aa).

The Extracellular segment spans residues 1 to 17; sequence MGPAGSALSSGQMQMQM. The chain crosses the membrane as a helical; Signal-anchor for type III membrane protein span at residues 18-38; it reads VLWGSLAAVAMFFLITFLILL. 2 S-palmitoyl cysteine lipidation sites follow: Cys39 and Cys42. The Cytoplasmic portion of the chain corresponds to 39-424; the sequence is CSSCDRDKKP…LQQGRDVTRL (386 aa). Phosphoserine occurs at positions 52 and 63. Position 107 is a phosphotyrosine; by LYN (Tyr107). Ser157 carries the post-translational modification Phosphoserine. Tyr165, Tyr183, and Tyr224 each carry phosphotyrosine. Positions 194–347 are disordered; that stretch reads DKSQGGKSKS…GPPQRSSSSC (154 aa). The span at 215–230 shows a compositional bias: basic and acidic residues; it reads AEGKADFAEYASVDRN. Ser226 carries the phosphoserine modification. The segment covering 236-247 has biased composition (polar residues); it reads STNAESILGTSS. Position 314 is a phosphotyrosine; by FYN and LYN (Tyr314). Residues 314–317 form an interaction with CSK region; that stretch reads YSSV. Polar residues predominate over residues 331-347; that stretch reads STCQCPQGPPQRSSSSC. Ser346 bears the Phosphoserine mark. A phosphotyrosine mark is found at Tyr351, Tyr381, and Tyr409. The segment at 361 to 424 is disordered; the sequence is PNSISMLPPA…LQQGRDVTRL (64 aa). An interaction with NHERF1 region spans residues 422–424; sequence TRL.

In terms of assembly, interacts with NHERF1/EBP50. In resting T-cells, part of a PAG1-NHERF1-MSN complex which is disrupted upon TCR activation. When phosphorylated, interacts with CSK. Identified in a complex with LYN and STAT3. Interacts with LYN. In terms of processing, palmitoylated. Post-translationally, phosphorylated by FYN on Tyr-314 in resting T-cells; which promotes interaction with CSK. Dephosphorylated by PTPRC/CD45 upon TCR activation; which leads to CSK dissociation. May also be dephosphorylated by PTPN11. Hyperphosphorylated in mast cells upon FCER1 activation. Phosphorylated by LYN in response to EPO. In terms of tissue distribution, ubiquitously expressed, with highest levels in developing brain, lung, thymus, spleen and testis. Present in mast cells.

The protein localises to the cell membrane. Negatively regulates TCR (T-cell antigen receptor)-mediated signaling in T-cells and FCER1 (high affinity immunoglobulin epsilon receptor)-mediated signaling in mast cells. Promotes CSK activation and recruitment to lipid rafts, which results in LCK inhibition. Inhibits immunological synapse formation by preventing dynamic arrangement of lipid raft proteins. May be involved in cell adhesion signaling. The protein is Phosphoprotein associated with glycosphingolipid-enriched microdomains 1 (Pag1) of Rattus norvegicus (Rat).